The following is a 686-amino-acid chain: Thymidine kinase (686 aa).

Positions 1–14 (MASNSHNNYNTPRR) are enriched in polar residues. 2 disordered regions span residues 1 to 21 (MASN…DVPK) and 64 to 85 (NPGL…PSSD). 243–250 (GCMAAGKT) contributes to the ATP binding site. The Proton acceptor role is filled by E270. Q308 contacts substrate. R398 contributes to the ATP binding site. R404 is a substrate binding site.

It belongs to the herpesviridae thymidine kinase family. In terms of assembly, homodimer.

It carries out the reaction thymidine + ATP = dTMP + ADP + H(+). In terms of biological role, catalyzes the transfer of the gamma-phospho group of ATP to thymidine to generate dTMP in the salvage pathway of pyrimidine synthesis. The dTMP serves as a substrate for DNA polymerase during viral DNA replication. Allows the virus to be reactivated and to grow in non-proliferative cells lacking a high concentration of phosphorylated nucleic acid precursors. The polypeptide is Thymidine kinase (Alcelaphine herpesvirus 1 (strain WC11) (AlHV-1)).